A 1181-amino-acid polypeptide reads, in one-letter code: DNA-directed RNA polymerase subunit beta' (1181 aa).

Zn(2+) contacts are provided by Cys68, Cys70, Cys83, and Cys86. Mg(2+) contacts are provided by Asp457, Asp459, and Asp461. The Zn(2+) site is built by Cys802, Cys876, Cys883, and Cys886.

Belongs to the RNA polymerase beta' chain family. In terms of assembly, the RNAP catalytic core consists of 2 alpha, 1 beta, 1 beta' and 1 omega subunit. When a sigma factor is associated with the core the holoenzyme is formed, which can initiate transcription. The cofactor is Mg(2+). Zn(2+) is required as a cofactor.

It carries out the reaction RNA(n) + a ribonucleoside 5'-triphosphate = RNA(n+1) + diphosphate. DNA-dependent RNA polymerase catalyzes the transcription of DNA into RNA using the four ribonucleoside triphosphates as substrates. The chain is DNA-directed RNA polymerase subunit beta' from Syntrophomonas wolfei subsp. wolfei (strain DSM 2245B / Goettingen).